Here is a 569-residue protein sequence, read N- to C-terminus: DNA-binding protein eta2 (569 aa).

Disordered stretches follow at residues 1 to 26 (MMLAIDMTINENQGTRSNLESPTLSC) and 133 to 159 (KRKIARSSSDDSESKVESTNSFNAKKR). Positions 9-26 (INENQGTRSNLESPTLSC) are enriched in polar residues. Residue Ser21 is modified to Phosphoserine. Myb-like domains lie at 322 to 371 (LDPK…RFVV) and 377 to 459 (ETID…EKTI). The segment at 459 to 487 (IASYSSNQRQEEDQGKKRKKRKKKKSKGK) is disordered. The span at 474-487 (KKRKKRKKKKSKGK) shows a compositional bias: basic residues.

The protein resides in the nucleus. This chain is DNA-binding protein eta2 (eta2), found in Schizosaccharomyces pombe (strain 972 / ATCC 24843) (Fission yeast).